Consider the following 274-residue polypeptide: NADPH-dependent 7-cyano-7-deazaguanine reductase (274 aa).

80–82 contacts substrate; sequence VES. 82-83 provides a ligand contact to NADPH; sequence SK. Residue Cys-181 is the Thioimide intermediate of the active site. Asp-188 functions as the Proton donor in the catalytic mechanism. Residue 220-221 coordinates substrate; the sequence is HE. 249 to 250 is a binding site for NADPH; sequence RG.

This sequence belongs to the GTP cyclohydrolase I family. QueF type 2 subfamily. As to quaternary structure, homodimer.

Its subcellular location is the cytoplasm. The enzyme catalyses 7-aminomethyl-7-carbaguanine + 2 NADP(+) = 7-cyano-7-deazaguanine + 2 NADPH + 3 H(+). The protein operates within tRNA modification; tRNA-queuosine biosynthesis. Functionally, catalyzes the NADPH-dependent reduction of 7-cyano-7-deazaguanine (preQ0) to 7-aminomethyl-7-deazaguanine (preQ1). This Burkholderia ambifaria (strain ATCC BAA-244 / DSM 16087 / CCUG 44356 / LMG 19182 / AMMD) (Burkholderia cepacia (strain AMMD)) protein is NADPH-dependent 7-cyano-7-deazaguanine reductase.